The chain runs to 312 residues: Taste receptor type 2 member 103 (312 aa).

At 1–16 (MVVTMRAALRLMLIST) the chain is on the extracellular side. The chain crosses the membrane as a helical span at residues 17 to 37 (VSLELIIGILANVFIALVNII). At 38 to 65 (DWIKRGKISAVDKIYMGLAISRTAFVLS) the chain is on the cytoplasmic side. The helical transmembrane segment at 66-86 (VITGFLIAFLDPASLGIGIMI) threads the bilayer. At 87–92 (RLLTMS) the chain is on the extracellular side. A helical membrane pass occupies residues 93–113 (WTVTNHFSVWFATCLSIFYFL). Topologically, residues 114 to 133 (KITNFSNTVFLALKWKVKKV) are cytoplasmic. The helical transmembrane segment at 134-154 (VSVTLVVSLIILFINVIVIHI) threads the bilayer. Residues 155-184 (YTDRFQVNMVQKCGANNTLRAYGLFLSIST) are Extracellular-facing. Residue asparagine 170 is glycosylated (N-linked (GlcNAc...) asparagine). The chain crosses the membrane as a helical span at residues 185–205 (VFTFIPFTASLTMFLLLIFSL). At 206 to 229 (WRHLKTMHHNATGSRDVSTVAHIK) the chain is on the cytoplasmic side. The helical transmembrane segment at 230–250 (GLQTVVAFLLLYTVFAMSLFS) threads the bilayer. At 251 to 264 (QSLSIDAQHTNLLS) the chain is on the extracellular side. Residues 265–285 (HFLRCIGVAFPSGHSCALILG) form a helical membrane-spanning segment. Residues 286–312 (NNKLRQASLSVIFWLRCKYKHTENQGP) are Cytoplasmic-facing.

This sequence belongs to the G-protein coupled receptor T2R family.

The protein resides in the membrane. In terms of biological role, gustducin-coupled receptor implicated in the perception of bitter compounds in the oral cavity and the gastrointestinal tract. Signals through PLCB2 and the calcium-regulated cation channel TRPM5. This Rattus norvegicus (Rat) protein is Taste receptor type 2 member 103.